Consider the following 1043-residue polypeptide: Chitin synthase 2 (1043 aa).

Polar residues predominate over residues 1–10; that stretch reads MAQESSNMDQ. 2 disordered regions span residues 1 to 133 and 215 to 234; these read MAQE…PRRP and ESDF…ERRG. The segment covering 11–21 has biased composition (basic and acidic residues); sequence SKSDNVTDNKP. Positions 43–58 are enriched in low complexity; it reads SASTSSLPTSRPSSSP. Polar residues-rich tracts occupy residues 59–73 and 81–93; these read GQSP…TSDT and VSPT…SRGS. A run of 6 helical transmembrane segments spans residues 663–683, 703–723, 738–758, 780–800, 907–927, and 931–951; these read FVSL…FYFI, IFAI…VLSM, MIIY…MVVM, YIIV…FLYL, YMVS…SEAF, and SVGN…LAVF.

It belongs to the chitin synthase family. Class II subfamily.

The protein resides in the cell membrane. It catalyses the reaction [(1-&gt;4)-N-acetyl-beta-D-glucosaminyl](n) + UDP-N-acetyl-alpha-D-glucosamine = [(1-&gt;4)-N-acetyl-beta-D-glucosaminyl](n+1) + UDP + H(+). Its function is as follows. Polymerizes chitin, a structural polymer of the cell wall and septum, by transferring the sugar moiety of UDP-GlcNAc to the non-reducing end of the growing chitin polymer. This chain is Chitin synthase 2 (CHS2), found in Paracoccidioides brasiliensis.